We begin with the raw amino-acid sequence, 463 residues long: Cysteine--tRNA ligase (463 aa).

Residue Cys-27 participates in Zn(2+) binding. The short motif at 29-39 (ATVQGLPHIGH) is the 'HIGH' region element. The Zn(2+) site is built by Cys-205, His-230, and Glu-234. Residues 261-265 (KMSKS) carry the 'KMSKS' region motif. Residue Lys-264 participates in ATP binding.

The protein belongs to the class-I aminoacyl-tRNA synthetase family. In terms of assembly, monomer. Requires Zn(2+) as cofactor.

Its subcellular location is the cytoplasm. The enzyme catalyses tRNA(Cys) + L-cysteine + ATP = L-cysteinyl-tRNA(Cys) + AMP + diphosphate. The sequence is that of Cysteine--tRNA ligase from Mycolicibacterium vanbaalenii (strain DSM 7251 / JCM 13017 / BCRC 16820 / KCTC 9966 / NRRL B-24157 / PYR-1) (Mycobacterium vanbaalenii).